We begin with the raw amino-acid sequence, 415 residues long: Zona pellucida-like domain-containing protein 1 (415 aa).

The first 19 residues, 1 to 19 (MEQIWLLLLLTIRVLPGSA), serve as a signal peptide directing secretion. The Extracellular portion of the chain corresponds to 20–372 (QFNGYNCDAN…PPFQLNAITS (353 aa)). One can recognise a ZP domain in the interval 43 to 320 (YCGVQAITMK…PICSHRERRD (278 aa)). 2 disulfide bridges follow: cysteine 44–cysteine 155 and cysteine 79–cysteine 104. N-linked (GlcNAc...) asparagine glycosylation is found at asparagine 121 and asparagine 164. 2 cysteine pairs are disulfide-bonded: cysteine 235–cysteine 296 and cysteine 255–cysteine 313. The tract at residues 323–360 (RRTTWSPQSSSGSAVLSAGPIITRSDETPTNNSQLGSP) is disordered. Polar residues-rich tracts occupy residues 325–336 (TTWSPQSSSGSA) and 350–359 (TPTNNSQLGS). A helical transmembrane segment spans residues 373–393 (ALISGMVILGVTSFSLLLCSL). The Cytoplasmic portion of the chain corresponds to 394 to 415 (ALLHRKGPTSLVLNGIRNPVFD).

Proteolytically cleaved before the transmembrane segment to yield the secreted form found in the extracellular matrix of the cupula. In terms of tissue distribution, detected in placenta, kidney, lung, pancreas and at very low level in other tissues.

The protein localises to the cytoplasmic vesicle membrane. It localises to the secreted. Its subcellular location is the extracellular space. The protein resides in the extracellular matrix. Functionally, glycoprotein which is a component of the gelatinous extracellular matrix in the cupulae of the vestibular organ. The polypeptide is Zona pellucida-like domain-containing protein 1 (ZPLD1) (Homo sapiens (Human)).